Reading from the N-terminus, the 299-residue chain is Taste receptor type 2 member 19 (299 aa).

Position 1 (methionine 1) is a topological domain, extracellular. The helical transmembrane segment at 2–22 (MCFLLIILSILVVFAFVLGNF) threads the bilayer. Over 23–55 (SNGFIALVNVIDWVNTRKISSADQILTALVVSR) the chain is Cytoplasmic. A helical transmembrane segment spans residues 56-76 (IGLLWVMLFLWYATVFNSALY). Topologically, residues 77 to 87 (GLEVRIVASNA) are extracellular. Residues 88 to 108 (WAVMNHFSIWLAASLSIFCLL) form a helical membrane-spanning segment. Over 109 to 127 (KIANFSNLIFLHLKKRIKS) the chain is Cytoplasmic. The helical transmembrane segment at 128 to 148 (VVLVILLGPLVFLICNLAVIT) threads the bilayer. Residues 149-181 (MDERVWTKEYEGNVTWKIKLRNAIQLSSLTVTT) lie on the Extracellular side of the membrane. The N-linked (GlcNAc...) asparagine glycan is linked to asparagine 161. The chain crosses the membrane as a helical span at residues 182-202 (LANLIPFTLSLICFLLLICSL). Residues 203–226 (CKHLKKMRLHSKGSQDPSTKVHIK) are Cytoplasmic-facing. Residues 227–247 (ALQTVTSFLMLFAIYFLCIIT) traverse the membrane as a helical segment. At 248–259 (STWNLRTQQSKL) the chain is on the extracellular side. A helical transmembrane segment spans residues 260–280 (VLLLCQTVAIMYPSFHSFILI). At 281–299 (MGSRKLKQTFLSVLWQMTR) the chain is on the cytoplasmic side.

It belongs to the G-protein coupled receptor T2R family.

The protein resides in the membrane. Its function is as follows. Receptor that may play a role in the perception of bitterness and is gustducin-linked. May play a role in sensing the chemical composition of the gastrointestinal content. The activity of this receptor may stimulate alpha gustducin, mediate PLC-beta-2 activation and lead to the gating of TRPM5. This is Taste receptor type 2 member 19 (TAS2R19) from Pan paniscus (Pygmy chimpanzee).